The chain runs to 341 residues: Twinfilin-2 (341 aa).

ADF-H domains lie at 1–131 and 169–305; these read ATEE…KHLS and GLAF…DEVH. Residue lysine 6 is modified to N6-acetyllysine. Tyrosine 301 is modified (phosphotyrosine). The tract at residues 314–341 is disordered; it reads AFAKPKGPGGKRGHKRLIRGPGENGDDS. A compositionally biased stretch (basic residues) spans 322-331; the sequence is GGKRGHKRLI. Serine 341 carries the phosphoserine modification.

The protein belongs to the actin-binding proteins ADF family. Twinfilin subfamily. Interacts with G-actin; ADP-actin form and capping protein (CP). May also be able to interact with TWF1 and phosphoinositides, PI(4,5)P2. When bound to PI(4,5)P2, it is down-regulated. Interacts with MYO7A. In terms of processing, phosphorylated on both serine and threonine residues.

It is found in the cytoplasm. The protein resides in the cytoskeleton. Its subcellular location is the perinuclear region. It localises to the cell projection. The protein localises to the stereocilium. Its function is as follows. Actin-binding protein involved in motile and morphological processes. Inhibits actin polymerization, likely by sequestering G-actin. By capping the barbed ends of filaments, it also regulates motility. Seems to play an important role in clathrin-mediated endocytosis and distribution of endocytic organelles. May play a role in regulating the mature length of the middle and short rows of stereocilia. The chain is Twinfilin-2 (TWF2) from Pongo abelii (Sumatran orangutan).